The sequence spans 636 residues: MTLEADKQTHGFQTEVKQLLQLMIHSLYSNKEIFLRELISNAADAADKLRFEALSAPSLLEEDPNLRIRVEFDKQAHTITIDDNGIGMSRDEAIAHLGTIAKSGTADFLKALSGDQRKDANLIGQFGVGFYSAFIVADHVDVYSRRAGLTAAEGVHWSSKGEGNFEVATIDKPQRGTRVVLHLKENEQHFAEGWTLRSTLKKYSDHIGLPIEMLKEHHGKEEEKDTPQEAEWEAVNKASALWTRPKNDIKDEEYQEFYKHISHDMTNPLAWSHNKVEGKLEYTSLLYVPTRAPFDLYHRNAAKGLKLYVQRVFIMDQAEQFLPLYLRFIKGVVDSADLSLNVSREILQSGPVVDSMKTALSKRALDMLEKLAKDAPEDYKTFWKNFGQVLKEGPAEDYSNREKVASLLRFASTYDTSGDPSVALTDYIARMKEGQDKLYYLTGESYAQIKDSPYLEVFRKKGIEVLLLVDRIDEWLMNYLHEFDGKSFVDIARGDLDLGNLDSEADKKAQEEIAKTKEALASRIKATLGEDVAEVRVSHRLTDSPAVLAIGEGDLGLQMRQLLEASGQKVPETKPVFEFNPSHPLIEKLDAEQDMDRFADLSRILFDQAALAAGDSLKDPANYVRRLNKLLLELSA.

The a; substrate-binding stretch occupies residues 1-344 (MTLEADKQTH…SADLSLNVSR (344 aa)). Residues 345–561 (EILQSGPVVD…EGDLGLQMRQ (217 aa)) form a b region. The c stretch occupies residues 562 to 636 (LLEASGQKVP…LNKLLLELSA (75 aa)).

The protein belongs to the heat shock protein 90 family. In terms of assembly, homodimer.

Its subcellular location is the cytoplasm. In terms of biological role, molecular chaperone. Has ATPase activity. The chain is Chaperone protein HtpG from Xylella fastidiosa (strain Temecula1 / ATCC 700964).